The sequence spans 507 residues: Maturase K (507 aa).

Belongs to the intron maturase 2 family. MatK subfamily.

The protein localises to the plastid. It localises to the chloroplast. In terms of biological role, usually encoded in the trnK tRNA gene intron. Probably assists in splicing its own and other chloroplast group II introns. The polypeptide is Maturase K (Cananga odorata (Ylang-ylang tree)).